A 445-amino-acid polypeptide reads, in one-letter code: UPF0210 protein SPJ_0248 (445 aa).

Belongs to the UPF0210 family. As to quaternary structure, homodimer.

This Streptococcus pneumoniae (strain JJA) protein is UPF0210 protein SPJ_0248.